Reading from the N-terminus, the 123-residue chain is uncharacterized protein (123 aa).

Residues 36-76 (VDRQENKKEFLSAEEAREKFKELINQVRSWKEQMSTLSKYA) adopt a coiled-coil conformation.

This is an uncharacterized protein from Aquifex aeolicus (strain VF5).